A 449-amino-acid chain; its full sequence is MTLSGQTMPLEARKCQSLTGRVRVPGDKSISHRALILGALAVGETRISGLLEGEDVLNTAKAMQALGAKVERRTDDNGGIAWSVRGVGTGGFATPEAPLDFGNSGTGCRLVMGAVAGCPIRAAFDGDGSLRSRPMRRILDPLELMGARVISQSDGGRLPLTLEGARDPLPIVYRTPVASAQIKSAVLLAGLSAPGVTTVIEREASRDHTELMLKHFGADIVSVAEGAHGRKISLTGQPELHGAGVTVPADPSSAAFPIVAALITEGSDIVLDDVMTNPLRTGLFVTLREMGASIEESETRLDAGEPMAQLRVKASRLRGIEVPAERAPSMIDEYLVLAVAAAFAEGTTVMRGLRELRVKESDRLEAAAAMLRAGGVAVEIAGDDLIVEGRGRVPGGGLVTTHMDHRIAMSALVMGCASDAPVKVDDIAFIATSFPDFVPMMQRLGANFA.

The 3-phosphoshikimate site is built by K28, S29, and R33. Residue K28 coordinates phosphoenolpyruvate. Phosphoenolpyruvate contacts are provided by G105 and R133. The 3-phosphoshikimate site is built by S179, Q181, D332, and K359. Residue Q181 coordinates phosphoenolpyruvate. The Proton acceptor role is filled by D332. Residues R363 and R406 each coordinate phosphoenolpyruvate.

Belongs to the EPSP synthase family. As to quaternary structure, monomer.

Its subcellular location is the cytoplasm. The enzyme catalyses 3-phosphoshikimate + phosphoenolpyruvate = 5-O-(1-carboxyvinyl)-3-phosphoshikimate + phosphate. It functions in the pathway metabolic intermediate biosynthesis; chorismate biosynthesis; chorismate from D-erythrose 4-phosphate and phosphoenolpyruvate: step 6/7. Catalyzes the transfer of the enolpyruvyl moiety of phosphoenolpyruvate (PEP) to the 5-hydroxyl of shikimate-3-phosphate (S3P) to produce enolpyruvyl shikimate-3-phosphate and inorganic phosphate. The chain is 3-phosphoshikimate 1-carboxyvinyltransferase from Nitrobacter winogradskyi (strain ATCC 25391 / DSM 10237 / CIP 104748 / NCIMB 11846 / Nb-255).